The primary structure comprises 172 residues: Ribosome maturation factor RimM (172 aa).

The PRC barrel domain occupies 98 to 171 (PGEYYYHQIV…KVIVELMEGL (74 aa)).

This sequence belongs to the RimM family. Binds ribosomal protein uS19.

It localises to the cytoplasm. In terms of biological role, an accessory protein needed during the final step in the assembly of 30S ribosomal subunit, possibly for assembly of the head region. Essential for efficient processing of 16S rRNA. May be needed both before and after RbfA during the maturation of 16S rRNA. It has affinity for free ribosomal 30S subunits but not for 70S ribosomes. This Levilactobacillus brevis (strain ATCC 367 / BCRC 12310 / CIP 105137 / JCM 1170 / LMG 11437 / NCIMB 947 / NCTC 947) (Lactobacillus brevis) protein is Ribosome maturation factor RimM.